The sequence spans 589 residues: Transmembrane 9 superfamily member 3 (589 aa).

A signal peptide spans 1–28 (MRPLPGALGVAAAAALWLLLLLLPRTRA). N174 carries an N-linked (GlcNAc...) asparagine glycan. 5 helical membrane passes run 224–244 (FSIFNSFMMVIFLVGLVSMIL), 294–314 (LIGSGCQIFAVSLIVIIVAMI), 328–348 (AIFVYAATSPVNGYFGGSLYA), 360–380 (FIGAFLIPAMVCGTAFFINFI), and 389–409 (AIPFGTMVAVCCICFFVILPL). The N-linked (GlcNAc...) asparagine glycan is linked to N419. Helical transmembrane passes span 449-469 (IVCLGGILPFGSIFIEMYFIF), 482-502 (GFMMLVLVILCIVTVCVTIVC), 519-539 (FLSAASTAIYVYMYSFYYYFF), and 551-571 (FYFGYMAVFSTALGIMCGAIG).

This sequence belongs to the nonaspanin (TM9SF) (TC 9.A.2) family.

Its subcellular location is the membrane. The sequence is that of Transmembrane 9 superfamily member 3 (TM9SF3) from Homo sapiens (Human).